Reading from the N-terminus, the 77-residue chain is Putative antitoxin VapB3 (77 aa).

The stretch at 10–60 (RRGLKKELEELGINYAEAVRKFLEELVARERRRRALERARALREELRKKGA) forms a coiled coil.

As to quaternary structure, forms a complex with putative toxin VapC3, possibly VapB(2)-VapC(2).

Its function is as follows. Antitoxin component of a type II toxin-antitoxin (TA) system. The chain is Putative antitoxin VapB3 (vAPb3) from Pyrobaculum aerophilum (strain ATCC 51768 / DSM 7523 / JCM 9630 / CIP 104966 / NBRC 100827 / IM2).